A 490-amino-acid chain; its full sequence is Kinetochore protein Nuf2 homolog (490 aa).

Coiled-coil stretches lie at residues 146–280 (DRKF…KLEA) and 310–407 (DLID…SETI). Disordered stretches follow at residues 346-365 (QSET…EERQ) and 468-490 (IDAG…SVFK).

It belongs to the NUF2 family. In terms of assembly, component of the NDC80 complex, which is composed of at least ndc-80 and him-10. The NDC80 complex interacts with knl-1.

It localises to the nucleus. It is found in the chromosome. The protein localises to the centromere. Its subcellular location is the kinetochore. Its function is as follows. Acts as a component of the essential kinetochore-associated NDC80 complex, which is required for chromosome segregation in mitosis and meiosis and spindle checkpoint activity. The ndc-80 complex synergistically enhances the affinity of the ska-1 complex for microtubules and may allow the ndc-80 complex to track depolymerizing microtubules. In Caenorhabditis elegans, this protein is Kinetochore protein Nuf2 homolog (him-10).